The following is a 128-amino-acid chain: Phosphoribosyl-AMP cyclohydrolase (128 aa).

Residue Asp77 participates in Mg(2+) binding. A Zn(2+)-binding site is contributed by Cys78. Mg(2+)-binding residues include Asp79 and Asp81. Cys95 and Cys102 together coordinate Zn(2+).

It belongs to the PRA-CH family. As to quaternary structure, homodimer. Requires Mg(2+) as cofactor. Zn(2+) serves as cofactor.

It localises to the cytoplasm. It catalyses the reaction 1-(5-phospho-beta-D-ribosyl)-5'-AMP + H2O = 1-(5-phospho-beta-D-ribosyl)-5-[(5-phospho-beta-D-ribosylamino)methylideneamino]imidazole-4-carboxamide. It participates in amino-acid biosynthesis; L-histidine biosynthesis; L-histidine from 5-phospho-alpha-D-ribose 1-diphosphate: step 3/9. In terms of biological role, catalyzes the hydrolysis of the adenine ring of phosphoribosyl-AMP. The protein is Phosphoribosyl-AMP cyclohydrolase of Methylococcus capsulatus (strain ATCC 33009 / NCIMB 11132 / Bath).